The sequence spans 540 residues: Glucose-6-phosphate isomerase (540 aa).

Glu-350 (proton donor) is an active-site residue. Catalysis depends on residues His-381 and Lys-503.

The protein belongs to the GPI family.

The protein localises to the cytoplasm. It carries out the reaction alpha-D-glucose 6-phosphate = beta-D-fructose 6-phosphate. It functions in the pathway carbohydrate biosynthesis; gluconeogenesis. The protein operates within carbohydrate degradation; glycolysis; D-glyceraldehyde 3-phosphate and glycerone phosphate from D-glucose: step 2/4. Functionally, catalyzes the reversible isomerization of glucose-6-phosphate to fructose-6-phosphate. The polypeptide is Glucose-6-phosphate isomerase (Burkholderia orbicola (strain AU 1054)).